The chain runs to 212 residues: Uridine kinase (212 aa).

12–19 contacts ATP; it reads GGSGGGKT.

This sequence belongs to the uridine kinase family.

The protein localises to the cytoplasm. It catalyses the reaction uridine + ATP = UMP + ADP + H(+). It carries out the reaction cytidine + ATP = CMP + ADP + H(+). The protein operates within pyrimidine metabolism; CTP biosynthesis via salvage pathway; CTP from cytidine: step 1/3. It participates in pyrimidine metabolism; UMP biosynthesis via salvage pathway; UMP from uridine: step 1/1. The polypeptide is Uridine kinase (Streptococcus pneumoniae serotype 19F (strain G54)).